The chain runs to 452 residues: MEISGKNILVVGLARTGVAVARFLARNGARVTVTDLRDESALAGPLRELAGLSVRYVLDRHDEADFAAADVVVVSPGVPQESPYLQAARRAGREVITEIELASRFVTVPMVAITGTNGKTTTTTLTGEIFSACGFRTFVGGNIGNPLIELVEGGETVERVVVEISSFQLEWISSFRPRVAVLLNITEDHLDRYATFQEYIDAKVRIFENQESTDYAVLNVDDPIVAGIAGRVAATVFPMSQQRELAEGVFHRDGVITFRHQGREERFPTARFRITGVHNIENIMASLAATLLLGCDAKQALAAVEGFGGLPHRMELVRELAGVRYYEDSKATNVGSVEKALASFNDITLIAGGKDKGGSYAPLAPLVTERVRHMVLIGEAKERMARELGSLTDTRMATTLEEAVELAASLTEPGGVVLFSPACSSFDMFRDYEERAQRFRAAVNALGTGERP.

115–121 is an ATP binding site; sequence GTNGKTT.

The protein belongs to the MurCDEF family.

Its subcellular location is the cytoplasm. It catalyses the reaction UDP-N-acetyl-alpha-D-muramoyl-L-alanine + D-glutamate + ATP = UDP-N-acetyl-alpha-D-muramoyl-L-alanyl-D-glutamate + ADP + phosphate + H(+). It functions in the pathway cell wall biogenesis; peptidoglycan biosynthesis. Functionally, cell wall formation. Catalyzes the addition of glutamate to the nucleotide precursor UDP-N-acetylmuramoyl-L-alanine (UMA). In Geobacter metallireducens (strain ATCC 53774 / DSM 7210 / GS-15), this protein is UDP-N-acetylmuramoylalanine--D-glutamate ligase.